The primary structure comprises 353 residues: MSTRRDLPQSPYLAAVAGRKPSRVPVWFMRQAGRSLPEYRALRRQHSMLAACFEPEVACEVTMQPIRRYHVDAAILFSDIVVPLRAAGVDLDIVADVGPVIAAPVRTVADVDAIKPIDPQSIAPVLDAVELLVAELGDTPLIGFAGAPFTLASYLVEGGPSRHHARTKAMMLAEPATWHALMTKLTDLTIEFLLGQIRAGVDAIQVFDSWAGMLSLADYRQYALPHSARVFATLAEHGVPMTHFGVGTAELLGAMSEAVKPGTAKVVGVDWRTALADAAARVQPGTALQGNLDPVVLLAGWPAVERAARAVVDDGRRAVDAGAAGYVFNLGHGVLPQTDPGVLTDLVSLVHSL.

Substrate contacts are provided by residues arginine 30–arginine 34, aspartate 79, tyrosine 154, serine 209, and histidine 332.

The protein belongs to the uroporphyrinogen decarboxylase family. Homodimer.

Its subcellular location is the cytoplasm. It catalyses the reaction uroporphyrinogen III + 4 H(+) = coproporphyrinogen III + 4 CO2. It participates in porphyrin-containing compound metabolism; protoporphyrin-IX biosynthesis; coproporphyrinogen-III from 5-aminolevulinate: step 4/4. In terms of biological role, catalyzes the decarboxylation of four acetate groups of uroporphyrinogen-III to yield coproporphyrinogen-III. The polypeptide is Uroporphyrinogen decarboxylase (Mycobacterium marinum (strain ATCC BAA-535 / M)).